Consider the following 429-residue polypeptide: MDKLLIRGGRQLRGEVLISGAKNAALPELCAALLTDQPVTLHNVPRLQDVSTMLKLVRNMGVAAERDDNGTVRLDAGDLSIPEAPYELVKTMRASVLALGPLLARFGHAKVSLPGGCAIGSRPVDQHIKGLQAMGAEIVVEHGYMIASLPAGRTRLKGARILTDMVTVTGTENFLMAAALAEGETLLENAAQEPEIVDLAEMLIRMGARIEGHGTSHIRIQGVEKLHGCEHAVVADRIEAGTFLCAVAATGGDVFLRHARADHMDAVIDKLRDAGCTVAAQEGGVRISSSAPACEHLKAQSFSTTEYPGFPTDMQAQFMALNVIARGASMVTETIFENRFMHVNEMVRLGATIHVEGKVAMVEGVQQLSGATVMATDLRASASLVIAGLVADGETLVDRIYHLDRGYDRMEAKLRGLGADIERISGAAA.

22-23 lines the phosphoenolpyruvate pocket; it reads KN. UDP-N-acetyl-alpha-D-glucosamine is bound at residue Arg93. Cys117 serves as the catalytic Proton donor. Cys117 is modified (2-(S-cysteinyl)pyruvic acid O-phosphothioketal). Residues 122–126, Asp313, and Ile335 each bind UDP-N-acetyl-alpha-D-glucosamine; that span reads RPVDQ.

Belongs to the EPSP synthase family. MurA subfamily.

The protein resides in the cytoplasm. The catalysed reaction is phosphoenolpyruvate + UDP-N-acetyl-alpha-D-glucosamine = UDP-N-acetyl-3-O-(1-carboxyvinyl)-alpha-D-glucosamine + phosphate. Its pathway is cell wall biogenesis; peptidoglycan biosynthesis. Its function is as follows. Cell wall formation. Adds enolpyruvyl to UDP-N-acetylglucosamine. In Variovorax paradoxus (strain S110), this protein is UDP-N-acetylglucosamine 1-carboxyvinyltransferase.